Reading from the N-terminus, the 955-residue chain is MSGCLQILTVLLCCRFWALVFSQDQSCCVHHAADIPRCRDACEQLASIRSESRLRHLLHRLPSYCPETLSELWICINNSLPGASRKSDGWVGLGCCELAISAECRRDCKQASSKNDISKVCKKDTENPLYSCITKNEMGSVCCSYAGRHTTCREYCQAIFRTDSSPTVSQISAVKEYCQSVSPPLILCVENYTRLHPTHRPIDSLHCCDRAEEAHCQLACKRILRTLSTEQEIMDGLISECGSQPLPQDPLWQCFLGSAHPPANTDPESPPIAKMDSAKLHCCFKANTSICRNMCVEISTSWGTQSWQEFDQHCEYNPVEMDLITCLADVREPCQLGCKELSYCTNFNNRPTELFRSCNVQSDQGALNDFKLWSNGSIRMPLMNIPVLDIRRCRPEMWKTVACALQIKPCYSRSRGSVICRSDCVEILRQCGDRRRFAEAQTPERICDLLSPTDDPERCIPLNRYLTASELESSVEEVIHPCNPNPCPSSHLCHVNRKGCHVGHDCLPYYCVPGCKLGEASEFLVPADARLQVPVHSAQPGCYEVCVCGQSGRLENCAEMPCFDTSKSCQIAGQRRSHGSSFRVDCNPCSCFAGDAVCSSRQCVRSDSSEEDRRLFTGLPCGCADHFVPVCAGNGRTYPSACVARCVGFTDSQFVFGSCRSFDPCSPNPCQRNQRCVPRRQVCLTDLSEFPCPQYECVSRPSSCDQKLLDPVCDTDNMEHANLCVLNLRGKTLAYSGHCQDACRRPREVCAHNGESYSTVCEAFSERVAVDYQGRCHAVGLESEFGSDSGCNAVPCPPLASDACQPVTPPGACCPVCAGMLRILWNKAQMNIFAKLNRDQPVSLHDILKILRLHVSVPQCDIFGYLSINSEIIILIAPVDQQPTPLQIEACSKEAEKIDSLINSGSPTLVSHVPLSAFLSSELQLSSVRSSSCVSISVCVLLLLCSLILTLTSDL.

The first 22 residues, 1–22 (MSGCLQILTVLLCCRFWALVFS), serve as a signal peptide directing secretion. The stretch at 28–75 (CVHHAADIPRCRDACEQLASIRSESRLRHLLHRLPSYCPETLSELWIC) is one Knot 1 repeat. Residues 28–326 (CVHHAADIPR…NPVEMDLITC (299 aa)) are 5 X Knot repeats. N-linked (GlcNAc...) asparagine glycosylation occurs at asparagine 77. Knot repeat units lie at residues 95-132 (CCELAISAECRRDCKQASSKNDISKVCKKDTENPLYSC) and 142-188 (CCSY…LILC). Residue asparagine 191 is glycosylated (N-linked (GlcNAc...) asparagine). 2 Knot repeats span residues 207-254 (CCDR…LWQC) and 282-326 (CCFK…LITC). N-linked (GlcNAc...) asparagine glycosylation is found at asparagine 287 and asparagine 375. Kazal-like domains follow at residues 615-661 (LFTG…SCRS), 686-741 (DLSE…HCQD), and 742-778 (ACRRPREVCAHNGESYSTVCEAFSERVAVDYQGRCHA). 5 disulfide bridges follow: cysteine 621–cysteine 646, cysteine 623–cysteine 642, cysteine 631–cysteine 659, cysteine 704–cysteine 724, and cysteine 713–cysteine 739. Residue serine 931 is the site of GPI-anchor amidated serine attachment. The propeptide occupies 932-955 (SCVSISVCVLLLLCSLILTLTSDL).

Belongs to the RECK family. As to quaternary structure, interacts (via knot repeats) with wnt7a (via disordered linker region); the interaction is direct. Interacts (via knot repeats) with wnt7b (via disordered linker region); the interaction is direct. Interacts with adgra2; the interaction is direct. As to expression, expressed in the cerebral endothelium.

It is found in the cell membrane. Functionally, functions together with adgra2 to enable brain endothelial cells to selectively respond to Wnt7 signals (wnt7a or wnt7b). Plays a key role in Wnt7-specific responses: required for central nervous system (CNS) angiogenesis and blood-brain barrier regulation. Acts as a Wnt7-specific coactivator of canonical Wnt signaling by decoding Wnt ligands: acts by interacting specifically with the disordered linker region of Wnt7, thereby conferring ligand selectivity for Wnt7. Adgra2 is then required to deliver reck-bound Wnt7 to frizzled by assembling a higher-order RECK-ADGRA2-Fzd-LRP5-LRP6 complex. Also acts as a serine protease inhibitor. This Danio rerio (Zebrafish) protein is Reversion-inducing cysteine-rich protein with Kazal motifs.